Here is a 348-residue protein sequence, read N- to C-terminus: Small ribosomal subunit biogenesis GTPase RsgA (348 aa).

The CP-type G domain occupies 72–230 (RNQLSRPAIA…IADTPGFNQP (159 aa)). Residues 121 to 124 (TKAD) and 172 to 180 (GPSGVGKSS) contribute to the GTP site. Zn(2+) is bound by residues cysteine 255, cysteine 260, histidine 262, and cysteine 268. Positions 305-322 (AKSDRQGQQRLEPLLDAK) are enriched in basic and acidic residues. The interval 305–348 (AKSDRQGQQRLEPLLDAKKYRRRSRRQQHQHVNPMAEEVLDSEW) is disordered. Residues 323–333 (KYRRRSRRQQH) are compositionally biased toward basic residues.

Belongs to the TRAFAC class YlqF/YawG GTPase family. RsgA subfamily. In terms of assembly, monomer. Associates with 30S ribosomal subunit, binds 16S rRNA. Zn(2+) serves as cofactor.

It is found in the cytoplasm. In terms of biological role, one of several proteins that assist in the late maturation steps of the functional core of the 30S ribosomal subunit. Helps release RbfA from mature subunits. May play a role in the assembly of ribosomal proteins into the subunit. Circularly permuted GTPase that catalyzes slow GTP hydrolysis, GTPase activity is stimulated by the 30S ribosomal subunit. The polypeptide is Small ribosomal subunit biogenesis GTPase RsgA (Thermosynechococcus vestitus (strain NIES-2133 / IAM M-273 / BP-1)).